We begin with the raw amino-acid sequence, 736 residues long: Transcription regulator protein BACH1 (736 aa).

In terms of domain architecture, BTB spans 34-100 (CDVTIFVEGQ…AYTAKLILSK (67 aa)). Position 196 is a phosphoserine (serine 196). Over residues 286-295 (MEPEETKKDP) the composition is skewed to basic and acidic residues. Disordered regions lie at residues 286 to 312 (MEPE…FPHN) and 349 to 389 (KPLS…RSSV). Phosphoserine occurs at positions 364 and 445. Positions 557–620 (CIHDIRRRSK…GETKQNLTGL (64 aa)) constitute a bZIP domain. The tract at residues 562–578 (RRRSKNRIAAQRCRKRK) is basic motif. The segment at 582 to 589 (IQNLESEI) is leucine-zipper. The interval 680–719 (LPPCARGNSEPGYARGQESQQMSTATSEQAGPAEQCRQSG) is disordered. Over residues 696–708 (QESQQMSTATSEQ) the composition is skewed to polar residues.

It belongs to the bZIP family. CNC subfamily. Heterodimer of BACH1 and MAFK. Ubiquitinated by the SCF(FBXL17) complex or by the by the SCF(FBXO22) complex, leading to its degradation by the proteasome. Under oxidative stress, reactive oxygen species covalently modify cysteine residues on the bZIP domain of BACH1 and release it from chromatin. If the BTB domain of BACH1 remains intact, its beta1-alpha6 degron is recognized by FBXO22, promoting its ubiquitination and degradation. If the structural integrity of the beta1-alpha6 degron is compromised, FBXL17 will transiently associate with the BACH1 BTB dimer and remodel it into stably bound monomer for ubiquitination and degradation.

Its subcellular location is the nucleus. Functionally, transcriptional regulator that acts as a repressor or activator, depending on the context. Binds to NF-E2 DNA binding sites. Plays important roles in coordinating transcription activation and repression by MAFK. Together with MAF, represses the transcription of genes under the control of the NFE2L2 oxidative stress pathway. The chain is Transcription regulator protein BACH1 from Homo sapiens (Human).